The sequence spans 271 residues: Hydroxyethylthiazole kinase (271 aa).

M45 is a binding site for substrate. The ATP site is built by R121 and T168. G195 is a substrate binding site.

Belongs to the Thz kinase family. Requires Mg(2+) as cofactor.

It carries out the reaction 5-(2-hydroxyethyl)-4-methylthiazole + ATP = 4-methyl-5-(2-phosphooxyethyl)-thiazole + ADP + H(+). The protein operates within cofactor biosynthesis; thiamine diphosphate biosynthesis; 4-methyl-5-(2-phosphoethyl)-thiazole from 5-(2-hydroxyethyl)-4-methylthiazole: step 1/1. Its function is as follows. Catalyzes the phosphorylation of the hydroxyl group of 4-methyl-5-beta-hydroxyethylthiazole (THZ). This Bacillus pumilus (strain SAFR-032) protein is Hydroxyethylthiazole kinase.